Consider the following 430-residue polypeptide: Trigger factor (430 aa).

The PPIase FKBP-type domain occupies 157-242 (GDLVALETWS…AVEVSEPVLP (86 aa)).

Belongs to the FKBP-type PPIase family. Tig subfamily.

The protein resides in the cytoplasm. It catalyses the reaction [protein]-peptidylproline (omega=180) = [protein]-peptidylproline (omega=0). Its function is as follows. Involved in protein export. Acts as a chaperone by maintaining the newly synthesized protein in an open conformation. Functions as a peptidyl-prolyl cis-trans isomerase. This Xanthomonas campestris pv. campestris (strain B100) protein is Trigger factor.